The chain runs to 266 residues: Putative carbamate hydrolase RutD (266 aa).

The protein belongs to the AB hydrolase superfamily. Hydrolase RutD family.

It catalyses the reaction carbamate + 2 H(+) = NH4(+) + CO2. Functionally, involved in pyrimidine catabolism. May facilitate the hydrolysis of carbamate, a reaction that can also occur spontaneously. This Enterobacter cloacae subsp. cloacae (strain ATCC 13047 / DSM 30054 / NBRC 13535 / NCTC 10005 / WDCM 00083 / NCDC 279-56) protein is Putative carbamate hydrolase RutD.